The primary structure comprises 479 residues: MAQHAVYFPDAFLTQMREAMPSTLSFDDFLAACQRPLRRSIRVNTLKISVTDFLALTAPYGWSLTPVPWCEEGFWIERDDEESLPLGSTAEHLSGLFYIQEASSMLPVAALFAEGNTPERIMDVAAAPGSKTTQIAARMNNQGAILANEFSASRVKVLHANISRCGISNVALTHFDGRVFGAALPETFDAILLDAPCSGEGVVRKDPDALKNWSVESNLDIAATQRELIDSAFHALRPGGTLVYSTCTLNREENESVCLWLKETYPEAVEFLPLGDLFPGAERALTAEGFLHVFPQIYDCEGFFVARLRKTAAIPPLPAPGYKVGKFPFAPMKGREATQITQAANASGLQWGENLHLWQRDKEVWLFPAEIEALIGKVRFSRLGIKLAESHNKGYRWQHEAVIALADPHHANAFELSHQEAEEWYRGRDVYPQTAPSADDVLVTFQHQPIGLAKRIGSRLKNSYPRELVRDGKLFTGND.

S-adenosyl-L-methionine is bound by residues 125-131 (AAAPGSK), glutamate 149, aspartate 176, and aspartate 194. Catalysis depends on cysteine 247, which acts as the Nucleophile.

Belongs to the class I-like SAM-binding methyltransferase superfamily. RsmB/NOP family.

The protein localises to the cytoplasm. The catalysed reaction is cytidine(1407) in 16S rRNA + S-adenosyl-L-methionine = 5-methylcytidine(1407) in 16S rRNA + S-adenosyl-L-homocysteine + H(+). Specifically methylates the cytosine at position 1407 (m5C1407) of 16S rRNA. The sequence is that of Ribosomal RNA small subunit methyltransferase F from Citrobacter koseri (strain ATCC BAA-895 / CDC 4225-83 / SGSC4696).